We begin with the raw amino-acid sequence, 218 residues long: Cytochrome b6 (218 aa).

Residues 35-55 (IFYCLGGITLVCFLIQFATGF) traverse the membrane as a helical segment. Heme c is bound at residue cysteine 38. 2 residues coordinate heme b: histidine 89 and histidine 103. Helical transmembrane passes span 93–113 (ASMM…TGGF), 119–139 (LTWI…VTGY), and 189–209 (LHTF…FLMI). Heme b is bound by residues histidine 190 and histidine 205.

It belongs to the cytochrome b family. PetB subfamily. The 4 large subunits of the cytochrome b6-f complex are cytochrome b6, subunit IV (17 kDa polypeptide, PetD), cytochrome f and the Rieske protein, while the 4 small subunits are PetG, PetL, PetM and PetN. The complex functions as a dimer. The cofactor is heme b. It depends on heme c as a cofactor.

It is found in the cellular thylakoid membrane. Functionally, component of the cytochrome b6-f complex, which mediates electron transfer between photosystem II (PSII) and photosystem I (PSI), cyclic electron flow around PSI, and state transitions. This is Cytochrome b6 from Prochlorococcus marinus (strain NATL1A).